The following is a 354-amino-acid chain: MASSSSNRSFLHRNANTFLTYPHCPENPEIISQKLWDLVARWNPLYIVCAREAHRDGNMHLHALLQTDKPVRTTDARIFDIEGFHPNIQSAKSVNKVRDYILKEPLAVFERGTFIPRKSCFQGNTPPFPKKNPNKDEIMAHIISHATSKQEYLCLVRKEFPYDWATKLQYFEYSANKLFPDIQEEFISPHPPSSPDLLCNESIKDWLQPNIYQPADEGSRKQSLYIVGPTRTGKSTWARSLGLHNYWQNNVDWSSYNEDAIYNIVDDIPFKYCPCWKQLVGCQKEFVVNPKYGKKKKVQMKSKPTIILANSDEDWMKEMTPGQLEYFEANCMIYVMSPGEKWYSPPQLPPTEEV.

The region spanning Leu-11–Phe-114 is the CRESS-DNA virus Rep endonuclease domain. Residues Phe-18–Tyr-21 carry the RCR-1 motif. A divalent metal cation-binding residues include Glu-52, His-60, and His-62. The RCR-2 signature appears at His-60–His-62. The For DNA cleavage activity role is filled by Tyr-100. Positions Tyr-100 to Lys-103 match the RCR-3 motif. A divalent metal cation is bound at residue Glu-104. Residues Ser-174 to Phe-186 form an oligomerization region. Residue Gly-228–Ser-235 participates in ATP binding. The interval Val-251–Pro-269 is transactivation. The Nuclear localization signal motif lies at Lys-291–Ser-302.

This sequence belongs to the geminiviridae Rep protein family. Homooligomer. Rep binds to repeated DNA motifs (iterons). Forms the O-complex, which is a Rep-DNA complex involved in the initiation of RCR. Part of the C- and V-complexes which are RepA-Rep-DNA complexes involved in the c-sense and v-sense transcription. Requires Mg(2+) as cofactor. It depends on Mn(2+) as a cofactor.

It is found in the host nucleus. Its function is as follows. Essential for the replication of viral ssDNA. The closed circular ssDNA genome is first converted to a superhelical dsDNA. Rep binds a specific region at the genome origin of replication. It introduces an endonucleolytic nick within the conserved sequence 5'-TAATATTAC-3' in the intergenic region of the genome present in all geminiviruses, thereby initiating the rolling circle replication (RCR). Following cleavage, binds covalently to the 5'-phosphate of DNA as a tyrosyl ester. The cleavage gives rise to a free 3'-OH that serves as a primer for the cellular DNA polymerase. The polymerase synthesizes the (+) strand DNA by rolling circle mechanism. After one round of replication, a Rep-catalyzed nucleotidyl transfer reaction releases a circular single-stranded virus genome, thereby terminating the replication. Displays origin-specific DNA cleavage, nucleotidyl transferase, ATPase and helicase activities. Acts as an inhibitor of C-sense gene transcription. This is Replication-associated protein from Avena sativa (Oat).